Reading from the N-terminus, the 298-residue chain is Elongation factor Ts (298 aa).

Positions 79 to 82 are involved in Mg(2+) ion dislocation from EF-Tu; that stretch reads TDFV.

This sequence belongs to the EF-Ts family.

Its subcellular location is the cytoplasm. Functionally, associates with the EF-Tu.GDP complex and induces the exchange of GDP to GTP. It remains bound to the aminoacyl-tRNA.EF-Tu.GTP complex up to the GTP hydrolysis stage on the ribosome. The sequence is that of Elongation factor Ts from Cereibacter sphaeroides (strain ATCC 17025 / ATH 2.4.3) (Rhodobacter sphaeroides).